The primary structure comprises 972 residues: FHF complex subunit HOOK-interacting protein 1B (972 aa).

Disordered stretches follow at residues 465–548 (APSP…GELE) and 573–644 (SAPY…SWPE). Residue serine 467 is modified to Phosphoserine. Over residues 478–501 (RGPGSPSVDSSSVTTVPRPSTPSR) the composition is skewed to low complexity. Residues serine 510, serine 523, serine 529, and serine 533 each carry the phosphoserine modification. The segment covering 523–535 (SPGLSASPASSPG) has biased composition (low complexity). Serine 859 and serine 897 each carry phosphoserine.

The protein belongs to the FHIP family. In terms of assembly, component of the FTS/Hook/FHIP complex (FHF complex), composed of AKTIP/FTS, FHIP1B, and one or more members of the Hook family of proteins HOOK1, HOOK2, and HOOK3. The FHF complex associates with the homotypic vesicular sorting complex (the HOPS complex).

Component of the FTS/Hook/FHIP complex (FHF complex). The FHF complex may function to promote vesicle trafficking and/or fusion via the homotypic vesicular protein sorting complex (the HOPS complex). FHF complex promotes the distribution of AP-4 complex to the perinuclear area of the cell. The polypeptide is FHF complex subunit HOOK-interacting protein 1B (Homo sapiens (Human)).